The following is a 306-amino-acid chain: Choline-binding protein (306 aa).

The first 22 residues, 1-22, serve as a signal peptide directing secretion; the sequence is MKRKYLKLMIGLALAATLTLSG. Cys-23 carries the N-palmitoyl cysteine lipid modification. The S-diacylglycerol cysteine moiety is linked to residue Cys-23.

The protein belongs to the OsmX family.

It is found in the cell membrane. In terms of biological role, member of a high affinity multicomponent binding-protein-dependent transport system for choline. In Bacillus subtilis (strain 168), this protein is Choline-binding protein (opuBC).